The primary structure comprises 172 residues: Ribosome maturation factor RimM (172 aa).

Residues proline 96–leucine 169 enclose the PRC barrel domain.

The protein belongs to the RimM family. As to quaternary structure, binds ribosomal protein uS19.

The protein resides in the cytoplasm. Its function is as follows. An accessory protein needed during the final step in the assembly of 30S ribosomal subunit, possibly for assembly of the head region. Essential for efficient processing of 16S rRNA. May be needed both before and after RbfA during the maturation of 16S rRNA. It has affinity for free ribosomal 30S subunits but not for 70S ribosomes. This Mycolicibacterium vanbaalenii (strain DSM 7251 / JCM 13017 / BCRC 16820 / KCTC 9966 / NRRL B-24157 / PYR-1) (Mycobacterium vanbaalenii) protein is Ribosome maturation factor RimM.